We begin with the raw amino-acid sequence, 248 residues long: DNA repair protein RecO (248 aa).

The protein belongs to the RecO family.

Functionally, involved in DNA repair and RecF pathway recombination. This is DNA repair protein RecO from Streptomyces griseus subsp. griseus (strain JCM 4626 / CBS 651.72 / NBRC 13350 / KCC S-0626 / ISP 5235).